The primary structure comprises 63 residues: Large ribosomal subunit protein uL29 (63 aa).

This sequence belongs to the universal ribosomal protein uL29 family.

This Shewanella frigidimarina (strain NCIMB 400) protein is Large ribosomal subunit protein uL29.